The following is a 155-amino-acid chain: Small ribosomal subunit protein uS7 (155 aa).

This sequence belongs to the universal ribosomal protein uS7 family. As to quaternary structure, part of the 30S ribosomal subunit. Contacts proteins S9 and S11.

Its function is as follows. One of the primary rRNA binding proteins, it binds directly to 16S rRNA where it nucleates assembly of the head domain of the 30S subunit. Is located at the subunit interface close to the decoding center, probably blocks exit of the E-site tRNA. This chain is Small ribosomal subunit protein uS7, found in Chlorobium limicola (strain DSM 245 / NBRC 103803 / 6330).